Reading from the N-terminus, the 1846-residue chain is MYEGKKTKNMFLTRALEKILADKEVKKAHHSQLRKACEVALEEIKVETEKQSPPHGEAKAGSGTLPPVKSKTNFIEADKYFLPFELACQSKCPRIVSTSLDCLQKLIAYGHLTGSAPDSTTPGKKLIDRIIETICGCFQGPQTDEGVQLQIIKALLTAVTSQHIEIHEGTVLQAVRTCYNIYLASKNLINQTTAKATLTQMLNVIFARMENQALQEAKQMERERHRQQHHLLQSPVSHHEPESPHLRYLPPQTVDHIAQEQEGDLDPQTHDVDKSLQDDIEPENGSDISSAENEQTEADQATAAETLSKDDVLCDGECEEKPQDIVQSIVEEMVDIIVGDMGEGTAVSASADGNAGAVEDGSDSENVQANGIPGTPISAAYTPSLPDDRLSVSSNDTQESGNSSGPSPGAKFSHILQKDAFLVFRSLCKLSMKPLSDGPPDPKSHELRSKILSLQLLLSILQNAGPVFRTNEMFINAIKQYLCVALSKNGVSSVPEVFELSLSIFLTLLSNFKTHLKMQIEVFFKEIFLYILETSTSSFDHKWMVIQTLTRICADAQSVVDIYVNYDCDLNAANIFERLVNDLSKIAQGRGSQELGMSNVQELSLRKKGLECLVSILKCMVEWSKDQYVNPNSQTTLGQEKPSEQEISEIKHPETINRYGSLNSLESTSSSGIGSYSTQMSGTDNPEQFEVLKQQKEIIEQGIDLFNKKPKRGIQYLQEQGMLGTTPEDIAQFLHQEERLDSTQAGEFLGDNDKFNKEVMYAYVDQHDFSGKDFVSALRLFLEGFRLPGEAQKIDRLMEKFAARYLECNQGQTLFASADTAYVLAYSIIMLTTDLHSPQVKNKMTKEQYIKMNRGINDSKDLPEEYLSAIYNEIAGKKISMKETKELTIPTKSTKQNVASEKQRRLLYNLEMEQMAKTAKALMEAVSHVQAPFTSATHLEHVRPMFKLAWTPFLAAFSVGLQDCDDTDVASLCLEGIRCAIRIACIFSIQLERDAYVQALARFTLLTVSSGITEMKQKNIDTIKTLITVAHTDGNYLGNSWHEILKCISQLELAQLIGTGVKPRYISGTVRGREGSLTGTKDQAPDEFVGLGLVGGNVDWKQIASIQESIGETSSQSVVVAVDRIFTGSTRLDGNAIVDFVRWLCAVSMDELLSTTHPRMFSLQKIVEISYYNMGRIRLQWSRIWEVIGDHFNKVGCNPNEDVAIFAVDSLRQLSMKFLEKGELANFRFQKDFLRPFEHIMKRNRSPTIRDMVVRCIAQMVNSQAANIRSGWKNIFSVFHLAASDQDESIVELAFQTSGHIVTLVFEKHFPATIDSFQDAVKCLSEFACNAAFPDTSMEAIRLIRHCAKYVSDRPQAFKEYTSDDMNVAPEDRVWVRGWFPILFELSCVINRCKLDVRTRGLTVMFEIMKTYGHTYEKHWWQDLFRIVFRIFDNMKLPEQQTEKAEWMTTTCNHALYAICDVFTQYLEVLSDVLLDDIFAQLYWCVQQDNEQLARSGTNCLENVVILNGEKFTLEIWDKTCNCTLDIFKTTIPHALLTWRPTSGEAAPPSPSAMSEKQLDAISQKSVDIHDSAQPRSSDNRQQAPLVSVSPASEEVSKGRPTAKFPEQKLFAALLIKCVVQLELIQTIDNIVFFPATSKKEDAENLAAAQRDAVDFDVRVDTQDQGMYRFLTSQQLFKLLDCLLESHRFAKAFNSNNEQRTALWKAGFKGKSKPNLLKQETSSLACGLRILFRMYTDESRVSAWEEVQQRLLNVCSEALSYFLTLTSESHREAWTNLLLLFLTKVLKISDNRFKAHASFYYPLLCEIMQFDLIPELRAVLRRFFLRIGIVFQISQPPEQELGINKQ.

The DCB; DCB:DCB domain and DCB:HUS domain interaction stretch occupies residues 2-224 (YEGKKTKNMF…QEAKQMERER (223 aa)). Position 52 is a phosphoserine (serine 52). 3 disordered regions span residues 217–248 (AKQM…HLRY), 264–302 (DLDP…DQAT), and 347–410 (VSAS…SPGA). Residues 267 to 277 (PQTHDVDKSLQ) are compositionally biased toward basic and acidic residues. A phosphoserine mark is found at serine 286, serine 289, serine 290, serine 394, and serine 407. The segment covering 391 to 406 (SVSSNDTQESGNSSGP) has biased composition (polar residues). An HUS; DCB:HUS domain interaction region spans residues 554 to 574 (ADAQSVVDIYVNYDCDLNAAN). Residues 631 to 684 (PNSQTTLGQEKPSEQEISEIKHPETINRYGSLNSLESTSSSGIGSYSTQMSGTD) form a disordered region. Residues 641–655 (KPSEQEISEIKHPET) show a composition bias toward basic and acidic residues. Positions 661 to 681 (SLNSLESTSSSGIGSYSTQMS) are enriched in low complexity. Residues 688 to 877 (QFEVLKQQKE…SAIYNEIAGK (190 aa)) enclose the SEC7 domain. Positions 708 to 712 (KKPKR) match the Nuclear localization signal (NLS) motif. 3 positions are modified to phosphoserine: serine 1076, serine 1563, and serine 1566. The interval 1571–1600 (DSAQPRSSDNRQQAPLVSVSPASEEVSKGR) is disordered. A compositionally biased stretch (polar residues) spans 1574 to 1585 (QPRSSDNRQQAP).

In terms of assembly, homodimer. Interacts with ARFGEF2/BIG2; both proteins are probably part of the same or very similar macromolecular complexes. Interacts with FKBP2. Interacts with MYO9B. Interacts with PRKAR1A and PRKAR2A. Interacts with PPP1CC. Interacts with NCL, FBL, NUP62 and U3 small nucleolar RNA. Interacts with DPY30. Interacts with PDE3A. Interacts with KANK1. Interacts with TBC1D22A and TBC1D22B. Post-translationally, phosphorylated. In vitro phosphorylated by PKA reducing its GEF activity and dephosphorylated by phosphatase PP1.

It is found in the cytoplasm. It localises to the perinuclear region. Its subcellular location is the golgi apparatus. The protein localises to the trans-Golgi network. The protein resides in the nucleus. It is found in the nucleolus. It localises to the nucleus matrix. Its subcellular location is the membrane. Inhibited by brefeldin A. In terms of biological role, promotes guanine-nucleotide exchange on ARF1 and ARF3. Promotes the activation of ARF1/ARF3 through replacement of GDP with GTP. Involved in vesicular trafficking. Required for the maintenance of Golgi structure; the function may be independent of its GEF activity. Required for the maturation of integrin beta-1 in the Golgi. Involved in the establishment and persistence of cell polarity during directed cell movement in wound healing. Proposed to act as A kinase-anchoring protein (AKAP) and may mediate crosstalk between Arf and PKA pathways. Inhibits GAP activity of MYO9B probably through competitive RhoA binding. The function in the nucleus remains to be determined. The chain is Brefeldin A-inhibited guanine nucleotide-exchange protein 1 (Arfgef1) from Rattus norvegicus (Rat).